Reading from the N-terminus, the 374-residue chain is Guanine nucleotide-binding protein subunit alpha-15 (374 aa).

Positions 41-374 (EELKLLLLGP…ARYLDEINLL (334 aa)) constitute a G-alpha domain. A G1 motif region spans residues 44-57 (KLLLLGPGESGKST). GTP-binding positions include 49 to 56 (GPGESGKS), 183 to 189 (LRSRMPT), 208 to 212 (DVGGQ), 277 to 280 (NKTD), and Ala346. Mg(2+) contacts are provided by Ser56 and Thr189. Residues 181-189 (DVLRSRMPT) form a G2 motif region. Residues 204–213 (LRIVDVGGQR) are G3 motif. The interval 273 to 280 (ILFLNKTD) is G4 motif. The G5 motif stretch occupies residues 344–349 (TCATDT).

This sequence belongs to the G-alpha family. G(q) subfamily. G proteins are composed of 3 units; alpha, beta and gamma. The alpha chain contains the guanine nucleotide binding site. As to expression, expressed primarily in hematopoietic cells. Coexpressed with EDG6 at the same relative levels in all tissues examined, with the highest levels in adult spleen and lung.

Functionally, guanine nucleotide-binding proteins (G proteins) are involved as modulators or transducers in various transmembrane signaling systems. This is Guanine nucleotide-binding protein subunit alpha-15 (Gna15) from Mus musculus (Mouse).